The primary structure comprises 865 residues: Leucine-rich repeat-containing protein 66 (865 aa).

A helical membrane pass occupies residues 4–24 (FYARVTVMVTGLCFVGTVTNP). Asn-42 is a glycosylation site (N-linked (GlcNAc...) asparagine). 5 LRR repeats span residues 138-160 (RLKV…WKLK), 161-182 (PLCS…GFHG), 185-206 (QLKS…AFKG), 209-230 (KLQV…VTIA), and 235-255 (NLEL…ANFQ). Asn-248 carries an N-linked (GlcNAc...) asparagine glycan. A helical transmembrane segment spans residues 366–386 (ALAVCLSVFITFVVAFCLGAF). Disordered stretches follow at residues 463–522 (RMLG…PGQH) and 654–749 (DTPS…AESV). The segment covering 470-479 (MDPSSQQSPG) has biased composition (polar residues). A compositionally biased stretch (basic and acidic residues) spans 675–688 (AVQRDASFDPHDDL). Residues 702-713 (FTLSSEGSQDTR) show a composition bias toward polar residues. Residues Ser-714 and Ser-748 each carry the phosphoserine modification. Residues 728-759 (SQPLPSRNLGEYKDSVTSAESVEDITSQQTLE) enclose the LRRNT domain. Asn-787 is a glycosylation site (N-linked (GlcNAc...) asparagine). Residues 840-865 (FPNIDSSPSPPCSDQDPSDPEEHDTK) are disordered. Residues 855–865 (DPSDPEEHDTK) are compositionally biased toward acidic residues.

The protein resides in the membrane. The sequence is that of Leucine-rich repeat-containing protein 66 (Lrrc66) from Rattus norvegicus (Rat).